The chain runs to 411 residues: ATPase GET3B (411 aa).

A chloroplast-targeting transit peptide spans 1 to 67 (MATLSSYLLS…RRRNSLQVKS (67 aa)). Residue 95–102 (KGGVGKTS) coordinates ATP. The active site involves Asp-124. Position 348 (Asn-348) interacts with ATP.

Belongs to the arsA ATPase family.

The protein resides in the plastid. It is found in the chloroplast stroma. The enzyme catalyses ATP + H2O = ADP + phosphate + H(+). The chain is ATPase GET3B from Arabidopsis thaliana (Mouse-ear cress).